The primary structure comprises 152 residues: Nucleoside diphosphate kinase B (152 aa).

An interaction with AKAP13 region spans residues 1-66 (MANLERTFIA…DRPFFPGLVK (66 aa)). ATP-binding residues include Lys12, Phe60, Arg88, Thr94, Arg105, and Asn115. His118 serves as the catalytic Pros-phosphohistidine intermediate.

Belongs to the NDK family. As to quaternary structure, hexamer of two different chains: An and B (A6, A5B, A4B2, A3B3, A2B4, AB5, B6). Interacts with CAPN8. Interacts with AKAP13. Interacts with ITGB1BP1 (via C-terminal domain region). Interacts with BCL2L10. It depends on Mg(2+) as a cofactor. The N-terminus is blocked.

It localises to the cytoplasm. The protein localises to the cell projection. Its subcellular location is the lamellipodium. It is found in the ruffle. The protein resides in the nucleus. The enzyme catalyses a 2'-deoxyribonucleoside 5'-diphosphate + ATP = a 2'-deoxyribonucleoside 5'-triphosphate + ADP. It catalyses the reaction a ribonucleoside 5'-diphosphate + ATP = a ribonucleoside 5'-triphosphate + ADP. The catalysed reaction is ATP + protein L-histidine = ADP + protein N-phospho-L-histidine.. Major role in the synthesis of nucleoside triphosphates other than ATP. The ATP gamma phosphate is transferred to the NDP beta phosphate via a ping-pong mechanism, using a phosphorylated active-site intermediate. Negatively regulates Rho activity by interacting with AKAP13/LBC. Acts as a transcriptional activator of the MYC gene; binds DNA non-specifically. Binds to both single-stranded guanine- and cytosine-rich strands within the nuclease hypersensitive element (NHE) III(1) region of the MYC gene promoter. Does not bind to duplex NHE III(1). Has G-quadruplex (G4) DNA-binding activity, which is independent of its nucleotide-binding and kinase activity. Binds both folded and unfolded G4 with similar low nanomolar affinities. Stabilizes folded G4s regardless of whether they are prefolded or not. Exhibits histidine protein kinase activity. This Rattus norvegicus (Rat) protein is Nucleoside diphosphate kinase B (Nme2).